A 715-amino-acid polypeptide reads, in one-letter code: NADH-ubiquinone oxidoreductase chain 5 (715 aa).

A run of 17 helical transmembrane segments spans residues 1–21 (MYLSIIILPLLGSIVAGFFGR), 30–50 (LITCLSVIITTGLAILAFFEV), 81–101 (LTVAMLIPVLIISSLVHIYSI), 119–139 (LFTFMMIILVTANNYLLMFVG), 140–160 (WEGVGVCSYLLVSFWFTRIAA), 177–197 (FLTIGMFVVLWTLGNLDYATV), 200–220 (LAPYINSDIATIIGICLLIGA), 241–261 (TPVSALIHAATMVTAGVYLLM), 274–294 (LLLCLWLGAITTVFSSLIGLF), 310–330 (LGMMVIAIGLSSYNVALFHLI), 331–351 (NHAFYKALLFLGAGSVIHAVA), 366–386 (LPLTYSVMLIASLSLVAFPYM), 403–423 (FSFSGVAVYIIATIGAIFTTL), 487–507 (GFFLSLPLVILALFSIFFGFI), 543–563 (TLFKLLPFIFTISFSLIALVL), 647–667 (IVTNYALFILVGFILYVFTFI), and 668–688 (SLLEGGLDLNLSLFILLLSLT).

It belongs to the complex I subunit 5 family.

It localises to the mitochondrion inner membrane. The catalysed reaction is a ubiquinone + NADH + 5 H(+)(in) = a ubiquinol + NAD(+) + 4 H(+)(out). Functionally, core subunit of the mitochondrial membrane respiratory chain NADH dehydrogenase (Complex I) that is believed to belong to the minimal assembly required for catalysis. Complex I functions in the transfer of electrons from NADH to the respiratory chain. The immediate electron acceptor for the enzyme is believed to be ubiquinone. This chain is NADH-ubiquinone oxidoreductase chain 5 (ndh-5), found in Neurospora crassa (strain ATCC 24698 / 74-OR23-1A / CBS 708.71 / DSM 1257 / FGSC 987).